A 679-amino-acid polypeptide reads, in one-letter code: Methionine--tRNA ligase (679 aa).

A 'HIGH' region motif is present at residues 15 to 25; that stretch reads PYANGPVHIGH. Residues Cys-147, Cys-150, Cys-160, and Cys-163 each contribute to the Zn(2+) site. The 'KMSKS' region motif lies at 332–336; that stretch reads KISTS. Thr-335 lines the ATP pocket. Positions 578 to 679 constitute a tRNA-binding domain; that stretch reads DFMKLDIRVG…KEVKPGSEVK (102 aa).

The protein belongs to the class-I aminoacyl-tRNA synthetase family. MetG type 1 subfamily. Homodimer. The cofactor is Zn(2+).

The protein localises to the cytoplasm. It catalyses the reaction tRNA(Met) + L-methionine + ATP = L-methionyl-tRNA(Met) + AMP + diphosphate. Functionally, is required not only for elongation of protein synthesis but also for the initiation of all mRNA translation through initiator tRNA(fMet) aminoacylation. The protein is Methionine--tRNA ligase of Parabacteroides distasonis (strain ATCC 8503 / DSM 20701 / CIP 104284 / JCM 5825 / NCTC 11152).